A 500-amino-acid polypeptide reads, in one-letter code: Probable trehalose-phosphate phosphatase 8 (500 aa).

It belongs to the trehalose phosphatase family. It depends on a divalent metal cation as a cofactor.

It catalyses the reaction alpha,alpha-trehalose 6-phosphate + H2O = alpha,alpha-trehalose + phosphate. The protein operates within glycan biosynthesis; trehalose biosynthesis. Removes the phosphate from trehalose 6-phosphate to produce free trehalose. Trehalose accumulation in plant may improve abiotic stress tolerance. This Oryza sativa subsp. japonica (Rice) protein is Probable trehalose-phosphate phosphatase 8 (TPP8).